The sequence spans 772 residues: UDP-N-acetylmuramoyl-L-alanyl-D-glutamate--2,6-diaminopimelate ligase MurE homolog, chloroplastic (772 aa).

The N-terminal 40 residues, 1–40 (MAFTFLSPHPVFLSLTGTTSSFSYKPVLLPFSRNSRTLTV), are a transit peptide targeting the chloroplast. 2 disordered regions span residues 42-87 (AGPA…KLEE) and 141-168 (LLKPNPPKTASLKKIGEEGNEEEGDVTD). 2 stretches are compositionally biased toward acidic residues: residues 54–63 (ADDDPPEAPE) and 158–168 (EGNEEEGDVTD). Serine 194 bears the Phosphoserine mark.

It belongs to the MurCDEF family. MurE subfamily. Component of the plastid-encoded plastid RNA polymerase (PEP) complex. Expressed in leaves and flowers.

It is found in the plastid. Its subcellular location is the chloroplast. Functionally, involved in chloroplast biogenesis. Required for thylakoid membrane development. Seems to be required for plastid-encoded plastid RNA polymerase (PEP)-dependent gene expression. This Arabidopsis thaliana (Mouse-ear cress) protein is UDP-N-acetylmuramoyl-L-alanyl-D-glutamate--2,6-diaminopimelate ligase MurE homolog, chloroplastic.